A 422-amino-acid polypeptide reads, in one-letter code: Inhibitor of growth protein 1 (422 aa).

A disordered region spans residues 261-349 (ELGDTAGNSG…EASPADLPID (89 aa)). Lys278 is covalently cross-linked (Glycyl lysine isopeptide (Lys-Gly) (interchain with G-Cter in SUMO2)). Residues 297-314 (RNNENRENASSNHDHDDG) show a composition bias toward basic and acidic residues. The span at 322 to 334 (KKAKTSKKKKRSK) shows a compositional bias: basic residues. The segment at 353–402 (PTYCLCNQVSYGEMIGCDNDECPIEWFHFSCVGLNHKPKGKWYCPKCRGE) adopts a PHD-type zinc-finger fold. Positions 356, 358, 369, 374, 380, 383, 396, and 399 each coordinate Zn(2+). The interval 405-422 (KTMDKALEKSKKERAYNR) is PBR.

Belongs to the ING family. In terms of assembly, interacts with H3K4me3 and to a lesser extent with H3K4me2. Interacts with TP53. Isoform 2 interacts with RSL1D1. Isoform 2 was expressed in all normal tissues and cells examined, as well as in all breast cancer and melanoma cell lines examined. Isoform 3 was expressed in testis, liver, and kidney, weakly expressed in colon and brain and not expressed in breast and cultured melanocytes. Isoform 4 was highly expressed in testis and weakly expressed in brain, but not expressed in breast, colon, kidney, melanocytes, breast cancer or melanoma cell lines.

Its subcellular location is the nucleus. Cooperates with p53/TP53 in the negative regulatory pathway of cell growth by modulating p53-dependent transcriptional activation. Implicated as a tumor suppressor gene. The chain is Inhibitor of growth protein 1 (ING1) from Homo sapiens (Human).